We begin with the raw amino-acid sequence, 1363 residues long: Spike glycoprotein (1363 aa).

An N-terminal signal peptide occupies residues 1 to 13 (MFLILLISLPTAF). The Extracellular segment spans residues 14–1307 (AVIGDLKCTT…GTYEYYVKWP (1294 aa)). One can recognise a BetaCoV S1-NTD domain in the interval 15–298 (VIGDLKCTTV…DFMSEIKCKT (284 aa)). 5 disulfides stabilise this stretch: Cys-21/Cys-165, Cys-160/Cys-193, Cys-172/Cys-252, Cys-286/Cys-296, and Cys-331/Cys-356. N-linked (GlcNAc...) asparagine; by host glycans are attached at residues Asn-59 and Asn-133. Residue Asn-198 is glycosylated (N-linked (GlcNAc...) asparagine; by host). One can recognise a BetaCoV S1-CTD domain in the interval 329–617 (PDCNIEAWLN…DVNSGTTCST (289 aa)). N-linked (GlcNAc...) asparagine; by host glycosylation is present at Asn-359. Cystine bridges form between Cys-374–Cys-427 and Cys-386–Cys-615. 7 N-linked (GlcNAc...) asparagine; by host glycosylation sites follow: Asn-437, Asn-649, Asn-676, Asn-696, Asn-714, Asn-739, and Asn-788. Fusion peptide stretches follow at residues 914–935 (SAIEDLLFSKVKLSDVGFVEAY) and 933–953 (EAYNNCTGGAEIRDLICVQSY). A glycan (N-linked (GlcNAc...) asparagine; by host) is linked at Asn-937. An intrachain disulfide couples Cys-938 to Cys-949. The heptad repeat 1 stretch occupies residues 1014–1064 (QKLIANAFNNALGAIQEGFDATNSALVKIQAVVNANAEALNNLLQQLSNRF). The stretch at 1043–1087 (QAVVNANAEALNNLLQQLSNRFGAISSSLQEILSRLDALEAQAQI) forms a coiled coil. 6 N-linked (GlcNAc...) asparagine; by host glycosylation sites follow: Asn-1194, Asn-1224, Asn-1234, Asn-1253, Asn-1267, and Asn-1288. Residues 1258–1296 (APDLSLDYINVTFLDLQDEMNRLQEAIKVLNQSYINLKD) are heptad repeat 2. Residues 1269–1297 (TFLDLQDEMNRLQEAIKVLNQSYINLKDI) are a coiled coil. A helical transmembrane segment spans residues 1308-1328 (WYVWLLIGFAGVAMLVLLFFI). The Cytoplasmic portion of the chain corresponds to 1329-1363 (CCCTGCGTSCFKKCGGCCDDYTGHQELVIKTSHDD). Positions 1359-1363 (TSHDD) match the KxHxx motif.

Belongs to the betacoronaviruses spike protein family. Homotrimer; each monomer consists of a S1 and a S2 subunit. The resulting peplomers protrude from the virus surface as spikes. Post-translationally, specific enzymatic cleavages in vivo yield mature proteins. The precursor is processed into S1 and S2 by host cell furin or another cellular protease to yield the mature S1 and S2 proteins. Additionally, a second cleavage leads to the release of a fusion peptide after viral attachment to host cell receptor. In terms of processing, the cytoplasmic Cys-rich domain is palmitoylated. Spike glycoprotein is digested within host endosomes.

It localises to the virion membrane. The protein resides in the host endoplasmic reticulum-Golgi intermediate compartment membrane. Its subcellular location is the host cell membrane. Functionally, attaches the virion to the cell membrane by interacting with host receptor, initiating the infection. Its function is as follows. Mediates fusion of the virion and cellular membranes by acting as a class I viral fusion protein. Under the current model, the protein has at least three conformational states: pre-fusion native state, pre-hairpin intermediate state, and post-fusion hairpin state. During viral and target cell membrane fusion, the coiled coil regions (heptad repeats) assume a trimer-of-hairpins structure, positioning the fusion peptide in close proximity to the C-terminal region of the ectodomain. The formation of this structure appears to drive apposition and subsequent fusion of viral and target cell membranes. Acts as a viral fusion peptide which is unmasked following S2 cleavage occurring upon virus endocytosis. The sequence is that of Spike glycoprotein from Bos taurus (Bovine).